A 366-amino-acid chain; its full sequence is Septin-1 (366 aa).

In terms of domain architecture, Septin-type G spans 22 to 295; that stretch reads KGFDFTLMVA…EGYRARCLQS (274 aa). Positions 32-39 are G1 motif; sequence GESGLGKS. Residues 32 to 39, Thr-66, Gly-92, and 171 to 179 contribute to the GTP site; these read GESGLGKS and KADALLPRE. The tract at residues 89-92 is G3 motif; the sequence is DTPG. The interval 170-173 is G4 motif; the sequence is GKAD. Phosphoserine is present on Ser-206. The GTP site is built by Gly-229 and Arg-244. Ser-247 carries the phosphoserine; by AURKB modification. Residue Thr-250 is modified to Phosphothreonine. Phosphoserine; by AURKB is present on residues Ser-306 and Ser-314. Positions 347 to 366 are disordered; that stretch reads EKMQAQMQQSQAQGEQSDVL. A compositionally biased stretch (low complexity) spans 349 to 366; sequence MQAQMQQSQAQGEQSDVL.

The protein belongs to the TRAFAC class TrmE-Era-EngA-EngB-Septin-like GTPase superfamily. Septin GTPase family. In terms of assembly, septins polymerize into heterooligomeric protein complexes that form filaments, and can associate with cellular membranes, actin filaments and microtubules. GTPase activity is required for filament formation. Interacts with AURKB.

Its subcellular location is the cytoplasm. The protein localises to the cytoskeleton. It localises to the microtubule organizing center. The protein resides in the centrosome. It is found in the midbody. In terms of biological role, filament-forming cytoskeletal GTPase. May play a role in cytokinesis (Potential). The chain is Septin-1 from Rattus norvegicus (Rat).